We begin with the raw amino-acid sequence, 237 residues long: Demethylmenaquinone methyltransferase (237 aa).

Residues T58, D79, and 106 to 107 (NA) each bind S-adenosyl-L-methionine.

It belongs to the class I-like SAM-binding methyltransferase superfamily. MenG/UbiE family.

It carries out the reaction a 2-demethylmenaquinol + S-adenosyl-L-methionine = a menaquinol + S-adenosyl-L-homocysteine + H(+). Its pathway is quinol/quinone metabolism; menaquinone biosynthesis; menaquinol from 1,4-dihydroxy-2-naphthoate: step 2/2. Methyltransferase required for the conversion of demethylmenaquinol (DMKH2) to menaquinol (MKH2). The protein is Demethylmenaquinone methyltransferase of Bacillus cereus (strain B4264).